Consider the following 214-residue polypeptide: Ornithine decarboxylase antizyme 1 (214 aa).

This sequence belongs to the ODC antizyme family. As to quaternary structure, interacts with ODC1 and thereby sterically blocks ODC homodimerization.

Functionally, ornithine decarboxylase (ODC) antizyme protein that negatively regulates ODC activity and intracellular polyamine biosynthesis and uptake in response to increased intracellular polyamine levels. Binds to ODC monomers, inhibiting the assembly of the functional ODC homodimer, and targets the monomers for ubiquitin-independent proteolytic destruction by the 26S proteasome. The polypeptide is Ornithine decarboxylase antizyme 1 (oaz1a) (Danio rerio (Zebrafish)).